A 361-amino-acid polypeptide reads, in one-letter code: Peptide chain release factor 1 (361 aa).

The residue at position 237 (Q237) is an N5-methylglutamine. The disordered stretch occupies residues 286 to 306; it reads AKQDQEQAAKRKSLVGSGDRS.

The protein belongs to the prokaryotic/mitochondrial release factor family. In terms of processing, methylated by PrmC. Methylation increases the termination efficiency of RF1.

The protein localises to the cytoplasm. Peptide chain release factor 1 directs the termination of translation in response to the peptide chain termination codons UAG and UAA. The protein is Peptide chain release factor 1 of Coxiella burnetii (strain CbuG_Q212) (Coxiella burnetii (strain Q212)).